A 96-amino-acid polypeptide reads, in one-letter code: Protein Vpr (96 aa).

The interval M1–L42 is homooligomerization. S79, S94, and S96 each carry phosphoserine; by host.

This sequence belongs to the HIV-1 VPR protein family. Homooligomer, may form homodimer. Interacts with p6-gag region of the Pr55 Gag precursor protein through a (Leu-X-X)4 motif near the C-terminus of the P6gag protein. Interacts with host UNG. May interact with host RAD23A/HHR23A. Interacts with host VPRBP/DCAF1, leading to hijack the CUL4A-RBX1-DDB1-DCAF1/VPRBP complex, mediating ubiquitination of host proteins such as TERT and ZGPAT and arrest of the cell cycle in G2 phase. Phosphorylated on several residues by host. These phosphorylations regulate VPR activity for the nuclear import of the HIV-1 pre-integration complex.

Its subcellular location is the virion. The protein localises to the host nucleus. It is found in the host extracellular space. During virus entry, plays a role in the transport of the viral pre-integration (PIC) complex to the host nucleus. This function is crucial for viral infection of non-dividing macrophages. May act directly at the nuclear pore complex, by binding nucleoporins phenylalanine-glycine (FG)-repeat regions. Its function is as follows. During virus replication, may deplete host UNG protein, and incude G2-M cell cycle arrest. Acts by targeting specific host proteins for degradation by the 26S proteasome, through association with the cellular CUL4A-DDB1 E3 ligase complex by direct interaction with host VPRPB/DCAF-1. Cell cycle arrest reportedly occurs within hours of infection and is not blocked by antiviral agents, suggesting that it is initiated by the VPR carried into the virion. Additionally, VPR induces apoptosis in a cell cycle dependent manner suggesting that these two effects are mechanistically linked. Detected in the serum and cerebrospinal fluid of AIDS patient, VPR may also induce cell death to bystander cells. The chain is Protein Vpr from Homo sapiens (Human).